A 203-amino-acid chain; its full sequence is Small ribosomal subunit protein uS4 (203 aa).

The S4 RNA-binding domain occupies R93 to K153.

This sequence belongs to the universal ribosomal protein uS4 family. In terms of assembly, part of the 30S ribosomal subunit. Contacts protein S5. The interaction surface between S4 and S5 is involved in control of translational fidelity.

Functionally, one of the primary rRNA binding proteins, it binds directly to 16S rRNA where it nucleates assembly of the body of the 30S subunit. In terms of biological role, with S5 and S12 plays an important role in translational accuracy. This is Small ribosomal subunit protein uS4 from Lactobacillus gasseri (strain ATCC 33323 / DSM 20243 / BCRC 14619 / CIP 102991 / JCM 1131 / KCTC 3163 / NCIMB 11718 / NCTC 13722 / AM63).